The following is a 110-amino-acid chain: uncharacterized protein (110 aa).

The interval 1–72 (MWRSSNQRGV…NHRNIHLRNP (72 aa)) is disordered. A compositionally biased stretch (basic residues) spans 10 to 23 (VSRRRDKSMRKYTR). Over residues 48 to 57 (KNTYTGNISS) the composition is skewed to polar residues.

This is an uncharacterized protein from Human herpesvirus 6A (strain Uganda-1102) (HHV-6 variant A).